Reading from the N-terminus, the 403-residue chain is Probable tRNA sulfurtransferase (403 aa).

The THUMP domain occupies 60 to 165 (QLVEERLKPI…KEGVFLSCRT (106 aa)). ATP-binding positions include 183–184 (ML), 208–209 (HF), R265, G287, and Q296.

The protein belongs to the ThiI family.

Its subcellular location is the cytoplasm. It catalyses the reaction [ThiI sulfur-carrier protein]-S-sulfanyl-L-cysteine + a uridine in tRNA + 2 reduced [2Fe-2S]-[ferredoxin] + ATP + H(+) = [ThiI sulfur-carrier protein]-L-cysteine + a 4-thiouridine in tRNA + 2 oxidized [2Fe-2S]-[ferredoxin] + AMP + diphosphate. The enzyme catalyses [ThiS sulfur-carrier protein]-C-terminal Gly-Gly-AMP + S-sulfanyl-L-cysteinyl-[cysteine desulfurase] + AH2 = [ThiS sulfur-carrier protein]-C-terminal-Gly-aminoethanethioate + L-cysteinyl-[cysteine desulfurase] + A + AMP + 2 H(+). It functions in the pathway cofactor biosynthesis; thiamine diphosphate biosynthesis. Functionally, catalyzes the ATP-dependent transfer of a sulfur to tRNA to produce 4-thiouridine in position 8 of tRNAs, which functions as a near-UV photosensor. Also catalyzes the transfer of sulfur to the sulfur carrier protein ThiS, forming ThiS-thiocarboxylate. This is a step in the synthesis of thiazole, in the thiamine biosynthesis pathway. The sulfur is donated as persulfide by IscS. This chain is Probable tRNA sulfurtransferase, found in Listeria monocytogenes serotype 4b (strain CLIP80459).